A 517-amino-acid chain; its full sequence is Ribose import ATP-binding protein RbsA 1 (517 aa).

2 ABC transporter domains span residues leucine 11–aspartate 251 and tyrosine 263–threonine 507. Glycine 43–serine 50 is a binding site for ATP.

This sequence belongs to the ABC transporter superfamily. Ribose importer (TC 3.A.1.2.1) family. In terms of assembly, the complex is composed of an ATP-binding protein (RbsA), two transmembrane proteins (RbsC) and a solute-binding protein (RbsB).

Its subcellular location is the cell inner membrane. It catalyses the reaction D-ribose(out) + ATP + H2O = D-ribose(in) + ADP + phosphate + H(+). Part of the ABC transporter complex RbsABC involved in ribose import. Responsible for energy coupling to the transport system. The protein is Ribose import ATP-binding protein RbsA 1 of Burkholderia cenocepacia (strain HI2424).